A 500-amino-acid chain; its full sequence is NAD(P)H-quinone oxidoreductase chain 4, chloroplastic (500 aa).

The next 14 membrane-spanning stretches (helical) occupy residues phenylalanine 4–leucine 24, isoleucine 37–leucine 57, leucine 80–alanine 100, leucine 113–serine 130, leucine 134–methionine 154, phenylalanine 167–leucine 187, alanine 208–isoleucine 228, histidine 242–valine 262, alanine 272–alanine 292, isoleucine 305–aspartate 325, glycine 330–glycine 350, leucine 386–threonine 406, isoleucine 416–methionine 436, and isoleucine 462–valine 482.

Belongs to the complex I subunit 4 family.

The protein localises to the plastid. Its subcellular location is the chloroplast thylakoid membrane. The enzyme catalyses a plastoquinone + NADH + (n+1) H(+)(in) = a plastoquinol + NAD(+) + n H(+)(out). It carries out the reaction a plastoquinone + NADPH + (n+1) H(+)(in) = a plastoquinol + NADP(+) + n H(+)(out). The polypeptide is NAD(P)H-quinone oxidoreductase chain 4, chloroplastic (Nuphar advena (Common spatterdock)).